We begin with the raw amino-acid sequence, 228 residues long: Large ribosomal subunit protein bL25 (228 aa).

Positions 1 to 10 (MNSLDANTRN) are enriched in polar residues. 2 disordered regions span residues 1–20 (MNSL…VRSL) and 187–228 (MKEP…EEKK). Over residues 202–228 (EDGKEAAPAAEGDKKDDGEKKATEEKK) the composition is skewed to basic and acidic residues.

This sequence belongs to the bacterial ribosomal protein bL25 family. CTC subfamily. In terms of assembly, part of the 50S ribosomal subunit; part of the 5S rRNA/L5/L18/L25 subcomplex. Contacts the 5S rRNA. Binds to the 5S rRNA independently of L5 and L18.

This is one of the proteins that binds to the 5S RNA in the ribosome where it forms part of the central protuberance. This Pelagibacter ubique (strain HTCC1062) protein is Large ribosomal subunit protein bL25.